The following is a 98-amino-acid chain: MVLIKLNIIMAFMLALTGVLIYRSHLMSTLLCLEGMMLSLFIFMAAVITHFHMFSISMMPLILLVFSACEAGVGLALLVTISNTYGNDQVQNLNLLQW.

3 consecutive transmembrane segments (helical) span residues 1-21 (MVLI…GVLI), 36-56 (MMLS…MFSI), and 61-81 (LILL…LVTI).

This sequence belongs to the complex I subunit 4L family. As to quaternary structure, core subunit of respiratory chain NADH dehydrogenase (Complex I) which is composed of 45 different subunits.

It localises to the mitochondrion inner membrane. It catalyses the reaction a ubiquinone + NADH + 5 H(+)(in) = a ubiquinol + NAD(+) + 4 H(+)(out). Functionally, core subunit of the mitochondrial membrane respiratory chain NADH dehydrogenase (Complex I) which catalyzes electron transfer from NADH through the respiratory chain, using ubiquinone as an electron acceptor. Part of the enzyme membrane arm which is embedded in the lipid bilayer and involved in proton translocation. In Metachirus nudicaudatus (Brown four-eyed opossum), this protein is NADH-ubiquinone oxidoreductase chain 4L (MT-ND4L).